Reading from the N-terminus, the 328-residue chain is Homeobox protein Hox-D1 (328 aa).

Positions threonine 204 to lysine 209 match the Antp-type hexapeptide motif. Positions serine 229 to glutamate 288 form a DNA-binding region, homeobox. Residues proline 305–serine 328 form a disordered region. The span at glycine 319–serine 328 shows a compositional bias: polar residues.

Belongs to the Antp homeobox family. Labial subfamily.

The protein localises to the nucleus. Sequence-specific transcription factor which is part of a developmental regulatory system that provides cells with specific positional identities on the anterior-posterior axis. Acts on the anterior body structures. This chain is Homeobox protein Hox-D1 (HOXD1), found in Homo sapiens (Human).